The sequence spans 1004 residues: Bifunctional glutamine synthetase adenylyltransferase/adenylyl-removing enzyme (1004 aa).

The interval 1 to 496 (MVRPPSARSA…LHAKLFYRPL (496 aa)) is adenylyl removase. The tract at residues 502 to 1004 (RMDPDALRLS…RAVVERVFGS (503 aa)) is adenylyl transferase.

It belongs to the GlnE family. The cofactor is Mg(2+).

It catalyses the reaction [glutamine synthetase]-O(4)-(5'-adenylyl)-L-tyrosine + phosphate = [glutamine synthetase]-L-tyrosine + ADP. The enzyme catalyses [glutamine synthetase]-L-tyrosine + ATP = [glutamine synthetase]-O(4)-(5'-adenylyl)-L-tyrosine + diphosphate. Involved in the regulation of glutamine synthetase GlnA, a key enzyme in the process to assimilate ammonia. When cellular nitrogen levels are high, the C-terminal adenylyl transferase (AT) inactivates GlnA by covalent transfer of an adenylyl group from ATP to specific tyrosine residue of GlnA, thus reducing its activity. Conversely, when nitrogen levels are low, the N-terminal adenylyl removase (AR) activates GlnA by removing the adenylyl group by phosphorolysis, increasing its activity. The regulatory region of GlnE binds the signal transduction protein PII (GlnB) which indicates the nitrogen status of the cell. The chain is Bifunctional glutamine synthetase adenylyltransferase/adenylyl-removing enzyme from Nocardia farcinica (strain IFM 10152).